The chain runs to 575 residues: Delta-selinene-like synthase, chloroplastic (575 aa).

Residues arginine 288, aspartate 325, aspartate 329, arginine 466, and aspartate 469 each coordinate (2E,6E)-farnesyl diphosphate. Positions 325 and 329 each coordinate Mg(2+). Residues 325-329 (DDLYD) carry the DDXXD motif motif. Aspartate 469 and glutamate 477 together coordinate Mg(2+).

This sequence belongs to the terpene synthase family. Tpsb subfamily. In terms of assembly, monomer. Mg(2+) serves as cofactor. Mn(2+) is required as a cofactor.

It is found in the plastid. The protein localises to the chloroplast. The catalysed reaction is (2E,6E)-farnesyl diphosphate = (+)-delta-selinene + diphosphate. It functions in the pathway secondary metabolite biosynthesis; terpenoid biosynthesis. It participates in terpene metabolism; oleoresin biosynthesis. Sesquiterpene synthase (sesqui-TPS) involved in the biosynthesis of sesquiterpene natural products. Catalyzes the conversion of (2E)-geranyl diphosphate (GPP) into delta-selinene. The protein is Delta-selinene-like synthase, chloroplastic of Picea sitchensis (Sitka spruce).